Reading from the N-terminus, the 259-residue chain is TCF3 fusion partner homolog (259 aa).

2 disordered regions span residues G51–R72 and E141–Q210. S167 carries the post-translational modification Phosphoserine. T172 is modified (phosphothreonine). 2 positions are modified to phosphoserine: S180 and S188. T203 carries the phosphothreonine modification. A Glycyl lysine isopeptide (Lys-Gly) (interchain with G-Cter in SUMO2) cross-link involves residue K222. The tract at residues V240–D259 is disordered. S255 carries the phosphoserine modification.

Interacts with NOL3; translocates NOL3 into the nucleus and negatively regulated TFPT-induced cell death. Component of the chromatin remodeling INO80 complex; specifically part of a complex module associated with the N-terminus of INO80. Ubiquitously expressed. Abundant in the brain.

The protein resides in the nucleus. Appears to promote apoptosis in a p53/TP53-independent manner. Its function is as follows. Putative regulatory component of the chromatin remodeling INO80 complex which is involved in transcriptional regulation, DNA replication and probably DNA repair. The sequence is that of TCF3 fusion partner homolog (Tfpt) from Rattus norvegicus (Rat).